The chain runs to 279 residues: Large ribosomal subunit protein uL2 (279 aa).

Residues R218–R279 are disordered. A compositionally biased stretch (basic residues) spans K255–R279.

It belongs to the universal ribosomal protein uL2 family. As to quaternary structure, part of the 50S ribosomal subunit. Forms a bridge to the 30S subunit in the 70S ribosome.

Its function is as follows. One of the primary rRNA binding proteins. Required for association of the 30S and 50S subunits to form the 70S ribosome, for tRNA binding and peptide bond formation. It has been suggested to have peptidyltransferase activity; this is somewhat controversial. Makes several contacts with the 16S rRNA in the 70S ribosome. This is Large ribosomal subunit protein uL2 from Sulfurimonas denitrificans (strain ATCC 33889 / DSM 1251) (Thiomicrospira denitrificans (strain ATCC 33889 / DSM 1251)).